The following is a 425-amino-acid chain: Serine--tRNA ligase (425 aa).

L-serine is bound at residue 230–232 (TAE). Position 261–263 (261–263 (RSE)) interacts with ATP. Residue E284 participates in L-serine binding. An ATP-binding site is contributed by 348–351 (EISS). L-serine is bound at residue S384.

The protein belongs to the class-II aminoacyl-tRNA synthetase family. Type-1 seryl-tRNA synthetase subfamily. As to quaternary structure, homodimer. The tRNA molecule binds across the dimer.

It is found in the cytoplasm. It catalyses the reaction tRNA(Ser) + L-serine + ATP = L-seryl-tRNA(Ser) + AMP + diphosphate + H(+). The catalysed reaction is tRNA(Sec) + L-serine + ATP = L-seryl-tRNA(Sec) + AMP + diphosphate + H(+). Its pathway is aminoacyl-tRNA biosynthesis; selenocysteinyl-tRNA(Sec) biosynthesis; L-seryl-tRNA(Sec) from L-serine and tRNA(Sec): step 1/1. In terms of biological role, catalyzes the attachment of serine to tRNA(Ser). Is also able to aminoacylate tRNA(Sec) with serine, to form the misacylated tRNA L-seryl-tRNA(Sec), which will be further converted into selenocysteinyl-tRNA(Sec). This chain is Serine--tRNA ligase, found in Streptococcus pyogenes serotype M3 (strain SSI-1).